Reading from the N-terminus, the 481-residue chain is Glutamate--tRNA ligase (481 aa).

The short motif at 28–38 (PSPTGFLHLGG) is the 'HIGH' region element. A compositionally biased stretch (basic and acidic residues) spans 139–148 (RYDGTWRPEP). Positions 139–159 (RYDGTWRPEPGKTLPPVPADR) are disordered. Residues 260–264 (KLSKR) carry the 'KMSKS' region motif. Lys263 contributes to the ATP binding site.

This sequence belongs to the class-I aminoacyl-tRNA synthetase family. Glutamate--tRNA ligase type 1 subfamily. As to quaternary structure, monomer.

Its subcellular location is the cytoplasm. It catalyses the reaction tRNA(Glu) + L-glutamate + ATP = L-glutamyl-tRNA(Glu) + AMP + diphosphate. Functionally, catalyzes the attachment of glutamate to tRNA(Glu) in a two-step reaction: glutamate is first activated by ATP to form Glu-AMP and then transferred to the acceptor end of tRNA(Glu). This Bordetella parapertussis (strain 12822 / ATCC BAA-587 / NCTC 13253) protein is Glutamate--tRNA ligase.